The chain runs to 339 residues: Small ribosomal subunit biogenesis GTPase RsgA (339 aa).

A CP-type G domain is found at 111–271; sequence MRGLLKPVAA…LIDSPGIREF (161 aa). Residues 159–162 and 213–221 each bind GTP; these read NKAD and GQSGVGKSS. 4 residues coordinate Zn(2+): Cys-295, Cys-300, His-302, and Cys-308.

This sequence belongs to the TRAFAC class YlqF/YawG GTPase family. RsgA subfamily. Monomer. Associates with 30S ribosomal subunit, binds 16S rRNA. Zn(2+) is required as a cofactor.

Its subcellular location is the cytoplasm. One of several proteins that assist in the late maturation steps of the functional core of the 30S ribosomal subunit. Helps release RbfA from mature subunits. May play a role in the assembly of ribosomal proteins into the subunit. Circularly permuted GTPase that catalyzes slow GTP hydrolysis, GTPase activity is stimulated by the 30S ribosomal subunit. This chain is Small ribosomal subunit biogenesis GTPase RsgA, found in Pseudomonas aeruginosa (strain ATCC 15692 / DSM 22644 / CIP 104116 / JCM 14847 / LMG 12228 / 1C / PRS 101 / PAO1).